The chain runs to 359 residues: Double-stranded RNA-binding protein 3 (359 aa).

DRBM domains are found at residues 1–70 (MYKN…ALSS) and 87–155 (IYKN…SLRK). The segment covering 266–280 (EKKQSLDDPKPEMRI) has biased composition (basic and acidic residues). Disordered stretches follow at residues 266-292 (EKKQ…SSSV) and 328-359 (APPP…SLPN). Pro residues predominate over residues 328 to 338 (APPPKPNPNPN).

Its function is as follows. Binds double-stranded RNA. The chain is Double-stranded RNA-binding protein 3 (DRB3) from Arabidopsis thaliana (Mouse-ear cress).